The sequence spans 465 residues: Fusarisetin A cluster transcription factor fsa5 (465 aa).

A DNA-binding region (zn(2)-C6 fungal-type) is located at residues 13–47 (CDRCRSHKLKCTVAPENTRSGSSRCTRCIRAQVTC). A disordered region spans residues 58–88 (STNVKKADLRSGTNGQETTSMQASTIVPGSP). A compositionally biased stretch (polar residues) spans 68–84 (SGTNGQETTSMQASTIV).

It localises to the nucleus. Transcription activator that specifically regulates the expression of the gene cluster that mediates the biosynthesis of fusarisetin A. This Fusarium sp. (strain FN080326) protein is Fusarisetin A cluster transcription factor fsa5.